A 505-amino-acid chain; its full sequence is T-cell activation GTPase-activating protein 1 (505 aa).

5 disordered regions span residues 81–147 (DDSL…SESS), 160–212 (QQDR…DPFT), 242–293 (QGHI…QREI), 311–339 (RTSS…SQLS), and 414–441 (KPST…HRLS). Over residues 90 to 102 (SDVSTLQNDSAYD) the composition is skewed to polar residues. Residues 203 to 212 (EGDEAEDPFT) are compositionally biased toward acidic residues. Over residues 250 to 262 (SRSSPGESLGSSP) the composition is skewed to low complexity. 2 stretches are compositionally biased toward basic and acidic residues: residues 283 to 292 (KTDKTKPQRE) and 318 to 336 (EKSK…RKES).

This Mus musculus (Mouse) protein is T-cell activation GTPase-activating protein 1 (Tagap1).